Here is a 565-residue protein sequence, read N- to C-terminus: NAD-dependent malic enzyme (565 aa).

The active-site Proton donor is Y104. R157 provides a ligand contact to NAD(+). K175 serves as the catalytic Proton acceptor. Residues E246, D247, and D270 each contribute to the a divalent metal cation site. NAD(+) is bound by residues D270 and N418.

This sequence belongs to the malic enzymes family. In terms of assembly, homotetramer. It depends on Mg(2+) as a cofactor. The cofactor is Mn(2+).

The catalysed reaction is (S)-malate + NAD(+) = pyruvate + CO2 + NADH. It catalyses the reaction oxaloacetate + H(+) = pyruvate + CO2. The chain is NAD-dependent malic enzyme from Pectobacterium carotovorum subsp. carotovorum (strain PC1).